The primary structure comprises 312 residues: Putative S-adenosyl-L-methionine-dependent methyltransferase BCG_1768c (312 aa).

Residues Asp-130 and Asp-159–Leu-160 contribute to the S-adenosyl-L-methionine site.

Belongs to the UPF0677 family.

In terms of biological role, exhibits S-adenosyl-L-methionine-dependent methyltransferase activity. This is Putative S-adenosyl-L-methionine-dependent methyltransferase BCG_1768c from Mycobacterium bovis (strain BCG / Pasteur 1173P2).